The following is a 411-amino-acid chain: Argininosuccinate synthase (411 aa).

Residues 13 to 21 (AYSGGLDTS) and alanine 40 contribute to the ATP site. 2 residues coordinate L-citrulline: tyrosine 91 and serine 96. Glycine 121 contacts ATP. L-aspartate is bound by residues threonine 123, asparagine 127, and aspartate 128. Position 127 (asparagine 127) interacts with L-citrulline. The L-citrulline site is built by arginine 131, serine 182, serine 191, glutamate 267, and tyrosine 279.

Belongs to the argininosuccinate synthase family. Type 1 subfamily. As to quaternary structure, homotetramer.

Its subcellular location is the cytoplasm. It catalyses the reaction L-citrulline + L-aspartate + ATP = 2-(N(omega)-L-arginino)succinate + AMP + diphosphate + H(+). The protein operates within amino-acid biosynthesis; L-arginine biosynthesis; L-arginine from L-ornithine and carbamoyl phosphate: step 2/3. The protein is Argininosuccinate synthase of Bartonella tribocorum (strain CIP 105476 / IBS 506).